The chain runs to 661 residues: MPNSEEVMAKERVVSPSAEFKKNANISLKNYKSLYKESIENPNKFWAREANRLIWFKKWTKVLSHDFKNAKVEWFKGGKLNVSYNCLDRHISTPLKNKAALIWEGDNPTESRVLTYYDVYREVNRFANILKKFGVKKGDRVLVYLPMIPELAITILACTRIGAIHSVVFGGFSPEALQSRIDDCKPKLVVTADGGFRGGKPIELKKNVDLALEKSKEKVKTVIVVRRTGNESGLTWKDGQDYWYHFLMNDPELSAYCKPEEMDAEDPLFILYTSGSTGKPKGVLHTTGGYLLGANLTFHYVFDIKPEDTYWCTADIGWVTGHSYLVYGPLSNGASSVMFEGVPSYPDAGRFWDVIDKYGVNIFYTAPTAIRALMREGLNHIQKRDLSSLRLLGSVGEPINPEAWEWYFKNIGKGKCPIVDTWWQTETGSIMITALPGAIPQKPGSATLPFFGVQPVLVDNDGKEITDKGEVSGNLCIKGPWPSMMRGVYGDPKRFFETYFSQFKGYYFTGDGARRDKDGYFWITGRVDDVINVSGHRIGSAEVESALVENKSVAEAAVVGFPHDIKGQGIYAYVTVKEGVTTNDVLKKELISTVEKMIGKIARPDVIHWAPGLPKTRSGKIMRRILRKIASGEFEGLGDTSTLADPSVVQKLIEDKKKFHS.

Residues 197–200 and Thr-320 contribute to the CoA site; that span reads RGGK. Residues 396 to 398, 420 to 425, Asp-511, and Arg-526 each bind ATP; these read GEP and DTWWQT. Ser-534 is a binding site for CoA. Arg-537 contributes to the ATP binding site. The Mg(2+) site is built by Val-548 and Val-553. At Lys-620 the chain carries N6-acetyllysine.

Belongs to the ATP-dependent AMP-binding enzyme family. The cofactor is Mg(2+). In terms of processing, acetylated. Deacetylation by the SIR2-homolog deacetylase activates the enzyme.

The catalysed reaction is acetate + ATP + CoA = acetyl-CoA + AMP + diphosphate. Its function is as follows. Catalyzes the conversion of acetate into acetyl-CoA (AcCoA), an essential intermediate at the junction of anabolic and catabolic pathways. AcsA undergoes a two-step reaction. In the first half reaction, AcsA combines acetate with ATP to form acetyl-adenylate (AcAMP) intermediate. In the second half reaction, it can then transfer the acetyl group from AcAMP to the sulfhydryl group of CoA, forming the product AcCoA. In Leptospira interrogans serogroup Icterohaemorrhagiae serovar copenhageni (strain Fiocruz L1-130), this protein is Acetyl-coenzyme A synthetase.